We begin with the raw amino-acid sequence, 93 residues long: Protein YzgL (93 aa).

The sequence is that of Protein YzgL (yzgL) from Escherichia coli (strain K12).